The primary structure comprises 461 residues: Histone acetyltransferase KAT5 (461 aa).

In terms of domain architecture, Tudor-knot spans 8-65; sequence IEGCRLPVLRRNQDNEDEWPLAEILSVKDISGRKLFYVHYIDFNKRLDEWVTHERLDL. Lysine 52 is subject to N6-acetyllysine. The tract at residues 70–168 is disordered; that stretch reads FPKKEAKTPT…RMTGSLVSDR (99 aa). A phosphoserine mark is found at serine 86 and serine 90. Basic and acidic residues predominate over residues 90–100; sequence SPEREVKRKVE. Lysine 96, lysine 98, lysine 135, and lysine 137 each carry N6-acetyllysine; by autocatalysis. Serine 147 is subject to Phosphoserine. In terms of domain architecture, MYST-type HAT spans 175–452; the sequence is TRMKNIECIE…IDSKCLHFTP (278 aa). A C2HC MYST-type zinc finger spans residues 208-233; sequence LYLCEFCLKYGRSLKCLQRHLTKCDL. Residue lysine 275 is modified to N6-acetyllysine; by autocatalysis. The interaction with ATF2 stretch occupies residues 316 to 461; sequence ACILTLPPYQ…PKDWSKRGKW (146 aa). Acetyl-CoA-binding positions include 318-320 and 325-331; these read ILT and QRRGYGK. Glutamate 351 functions as the Proton donor/acceptor in the catalytic mechanism. Acetyl-CoA-binding residues include serine 355 and serine 364. Lysine 378 is covalently cross-linked (Glycyl lysine isopeptide (Lys-Gly) (interchain with G-Cter in SUMO1); alternate). Lysine 378 participates in a covalent cross-link: Glycyl lysine isopeptide (Lys-Gly) (interchain with G-Cter in SUMO2); alternate. A Glycyl lysine isopeptide (Lys-Gly) (interchain with G-Cter in SUMO1) cross-link involves residue lysine 399.

The protein belongs to the MYST (SAS/MOZ) family. As to quaternary structure, component of the NuA4 histone acetyltransferase complex which contains the catalytic subunit KAT5/TIP60 and the subunits EP400, TRRAP/PAF400, BRD8/SMAP, EPC1, DMAP1/DNMAP1, RUVBL1/TIP49, RUVBL2, ING3, actin, ACTL6A/BAF53A, MORF4L1/MRG15, MORF4L2/MRGX, MRGBP, YEATS4/GAS41, VPS72/YL1 and MEAF6. KAT5/TIP60, EPC1, and ING3 together constitute a minimal HAT complex termed Piccolo NuA4. The NuA4 complex interacts with MYC. Interacts with ATM. Interacts with JADE1. Interacts with PLA2G4A/CPLA2, EDNRA and HDAC7. Interacts with the cytoplasmic tail of APP and APBB1/FE65. Interacts with TRIM24 and TRIM68. Forms a complex with SENP6 and UBE2I in response to UV irradiation. Identified in a complex with HINT1. Interacts with ATF2 and CUL3. Interacts with NR1D2 (via N-terminus). Component of a SWR1-like complex. Interacts with FOXP3. Interacts with ZBTB49. Interacts with SRF. Interacts with ATF3; promoting autoacetylation and deubiquitination by USP7. Interacts with EP300/p300; interaction promotes KAT5 autoacetylation. Interacts with PRKDC; interaction is impaired following KAT5 sumoylation. Interacts with GPR50. In terms of processing, phosphorylated on Ser-86 and Ser-90; enhanced during G2/M phase. The phosphorylated form has a higher activity. Phosphorylation at Ser-90 by CDK1 or CDK9 is a prerequisite for phosphorylation at Ser-86 by GSK3. Phosphorylation at Ser-86 by GSK3 (GSK3A or GSK3B) activates acetyltransferase and acyltransferase activities. Phosphorylation at Ser-90 by CDK9 promotes KAT5 recruitment to chromatin. Phosphorylation by VRK1 following DNA damage promotes KAT5 association with chromatin and histone acetyltransferase activity. Post-translationally, autoacetylated. Autoacetylation is required for histone acetyltransferase activity. Autoacetylation at Lys-275 is facilitated by interaction with EP300/p300: it prevents ubiquitination and subsequent degradation by the proteasome and promotes acetylation of target proteins. Deacetylated by HDAC3 and SIRT1. Deacetylation by HDAC3 promotes its ubiquitination and cytoplasmic localization. Sumoylated by UBE2I at Lys-378 and Lys-399, leading to increase of its histone acetyltransferase activity in UV-induced DNA damage response, as well as its translocation to nuclear bodies. Sumoylation with SUMO2 by PIAS4 at Lys-378 promotes repair of DNA double-strand breaks (DSBs) via homologous recombination (HR). Sumoylation by PIAS4 impairs interaction with PRKDC, inhibiting non-homologous end joining (NHEJ)-mediated repair of DSBs, thereby facilitating HR. Desumoylated by SENP3. In terms of processing, ubiquitinated by MDM2, leading to its proteasome-dependent degradation. Ubiquitination is prevented by autoacetylation at Lys-275. Ubiquitinated following deacetylation by HDAC3, leading to cytoplasmic localization. Deubiquitinated by USP7 following interaction with ATF3, promoting its stabilization.

It is found in the nucleus. It localises to the chromosome. The protein localises to the cytoplasm. The protein resides in the centromere. Its subcellular location is the kinetochore. It is found in the cytoskeleton. It localises to the spindle pole. The protein localises to the nucleolus. The protein resides in the perinuclear region. The enzyme catalyses L-lysyl-[histone] + acetyl-CoA = N(6)-acetyl-L-lysyl-[histone] + CoA + H(+). The catalysed reaction is L-lysyl-[protein] + acetyl-CoA = N(6)-acetyl-L-lysyl-[protein] + CoA + H(+). It catalyses the reaction (2E)-butenoyl-CoA + L-lysyl-[protein] = N(6)-(2E)-butenoyl-L-lysyl-[protein] + CoA + H(+). It carries out the reaction 2-hydroxyisobutanoyl-CoA + L-lysyl-[protein] = N(6)-(2-hydroxyisobutanoyl)-L-lysyl-[protein] + CoA + H(+). The enzyme catalyses (S)-lactoyl-CoA + L-lysyl-[protein] = N(6)-[(S)-lactoyl]-L-lysyl-[protein] + CoA + H(+). With respect to regulation, acyltransferase and acetyltransferase activities are activated by phosphorylation and autoacetylation. Autoacetylation activates the histone acetyltransferase activity. Catalytic subunit of the NuA4 histone acetyltransferase complex, a multiprotein complex involved in transcriptional activation of select genes principally by acetylation of nucleosomal histones H2A and H4. Histone acetylation alters nucleosome-DNA interactions and promotes interaction of the modified histones with other proteins which positively regulate transcription. The NuA4 histone acetyltransferase complex is required for the activation of transcriptional programs associated with proto-oncogene mediated growth induction, tumor suppressor mediated growth arrest and replicative senescence, apoptosis, and DNA repair. The NuA4 complex plays a direct role in repair of DNA double-strand breaks (DSBs) by promoting homologous recombination (HR): the complex inhibits TP53BP1 binding to chromatin via MBTD1, which recognizes and binds histone H4 trimethylated at 'Lys-20' (H4K20me), and KAT5 that catalyzes acetylation of 'Lys-15' of histone H2A (H2AK15ac), thereby blocking the ubiquitination mark required for TP53BP1 localization at DNA breaks. Also involved in DSB repair by mediating acetylation of 'Lys-5' of histone H2AX (H2AXK5ac), promoting NBN/NBS1 assembly at the sites of DNA damage. The NuA4 complex plays a key role in hematopoietic stem cell maintenance and is required to maintain acetylated H2A.Z/H2AZ1 at MYC target genes. The NuA4 complex is also required for spermatid development by promoting acetylation of histones: histone hyperacetylation is required for histone replacement during the transition from round to elongating spermatids. Component of a SWR1-like complex that specifically mediates the removal of histone H2A.Z/H2AZ1 from the nucleosome. Also acetylates non-histone proteins, such as BMAL1, ATM, AURKB, CHKA, CGAS, ERCC4/XPF, LPIN1, TP53/p53, NDC80/HEC1, NR1D2, RAN, SOX4, FOXP3, SQSTM1, ULK1 and RUBCNL/Pacer. Directly acetylates and activates ATM. Promotes nucleotide excision repair (NER) by mediating acetylation of ERCC4/XPF, thereby promoting formation of the ERCC4-ERCC1 complex. Relieves NR1D2-mediated inhibition of APOC3 expression by acetylating NR1D2. Acts as a regulator of regulatory T-cells (Treg) by catalyzing FOXP3 acetylation, thereby promoting FOXP3 transcriptional repressor activity. Involved in skeletal myoblast differentiation by mediating acetylation of SOX4. Catalyzes acetylation of APBB1/FE65, increasing its transcription activator activity. Promotes transcription elongation during the activation phase of the circadian cycle by catalyzing acetylation of BMAL1, promoting elongation of circadian transcripts. Together with GSK3 (GSK3A or GSK3B), acts as a regulator of autophagy: phosphorylated at Ser-86 by GSK3 under starvation conditions, leading to activate acetyltransferase activity and promote acetylation of key autophagy regulators, such as ULK1 and RUBCNL/Pacer. Acts as a regulator of the cGAS-STING innate antiviral response by catalyzing acetylation the N-terminus of CGAS, thereby promoting CGAS DNA-binding and activation. Also regulates lipid metabolism by mediating acetylation of CHKA or LPIN1. Promotes lipolysis of lipid droplets following glucose deprivation by mediating acetylation of isoform 1 of CHKA, thereby promoting monomerization of CHKA and its conversion into a tyrosine-protein kinase. Acts as a regulator of fatty-acid-induced triacylglycerol synthesis by catalyzing acetylation of LPIN1, thereby promoting the synthesis of diacylglycerol. In addition to protein acetyltransferase, can use different acyl-CoA substrates, such as (2E)-butenoyl-CoA (crotonyl-CoA), S-lactoyl-CoA (lactyl-CoA) and 2-hydroxyisobutanoyl-CoA (2-hydroxyisobutyryl-CoA), and is able to mediate protein crotonylation, lactylation and 2-hydroxyisobutyrylation, respectively. Acts as a key regulator of chromosome segregation and kinetochore-microtubule attachment during mitosis by mediating acetylation or crotonylation of target proteins. Catalyzes acetylation of AURKB at kinetochores, increasing AURKB activity and promoting accurate chromosome segregation in mitosis. Acetylates RAN during mitosis, promoting microtubule assembly at mitotic chromosomes. Acetylates NDC80/HEC1 during mitosis, promoting robust kinetochore-microtubule attachment. Catalyzes crotonylation of MAPRE1/EB1, thereby ensuring accurate spindle positioning in mitosis. Catalyzes lactylation of NBN/NBS1 in response to DNA damage, thereby promoting DNA double-strand breaks (DSBs) via homologous recombination (HR). This chain is Histone acetyltransferase KAT5, found in Pongo abelii (Sumatran orangutan).